The sequence spans 902 residues: MSEFRIHHDVNELLSLLRVHGGDGAEVYIDLLQKNRTPYVTTTVSAHSAKVKIAEFSRTPEDFLKKYDELKSKNTRNLDPLVYLLSKLTEDKETLQYLQQNAKERAELAAAAVGSSTTSINVPAAASKISMQELEELRKQLGSVATGSTLQQSLELKRKMLRDKQNKKNSGQHLPIFPAWVYERPALIGDFLIGAGISTDTALPIGTLPLASQESAVVEDLLYVLVGVDGRYVSAQPLAGRQSRTFLVDPNLDLSIRELVHRILPVAASYSAVTRFIEEKSSFEYGQVNHALAAAMRTLVKEHLILVSQLEQLHRQGLLSLQKLWFYIQPAMRTMDILASLATSVDKGECLGGSTLSLLHDRSFSYTGDSQAQELCLYLTKAASAPYFEVLEKWIYRGIIHDPYSEFMVEEHELRKERIQEDYNDKYWDQRYTIVQQQIPSFLQKMADKILSTGKYLNVVRECGHDVTCPVAKEIIYTLKERAYVEQIEKAFNYASKVLLDFLMEEKELVAHLRSIKRYFLMDQGDFFVHFMDLAEEELRKPVEDITPPRLEALLELALRMSTANTDPFKDDLKIDLMPHDLITQLLRVLAIETKQEKAMAHADPTELALSGLEAFSFDYIVKWPLSLIINRKALTRYQMLFRHMFYCKHVERQLCSVWISNKTAKQHSLHSAQWFAGAFTLRQRMLNFVQNIQYYMMFEVMEPTWHILEKNLKSASNIDDVLGHHTGFLDTCLKDCMLTNPELLKVFSKLMSVCVMFTNCMQKFTQSMKLDGELGGQTLEHSTVLGLPAGAEERARKELARKHLAEHADTVQLVSGFEATINKFDKNFSAHLLDLLARLSIYSTSDCEHGMASVISRLDFNGFYTERLERLSAERSQKATPQVPVLRGPPAPAPRVAVTAQ.

The residue at position 83 (Tyr-83) is a Phosphotyrosine. Positions 874–902 (AERSQKATPQVPVLRGPPAPAPRVAVTAQ) are disordered.

The protein belongs to the TUBGCP family. In terms of assembly, component of the gamma-tubulin ring complex (gTuRC) consisting of TUBGCP2, TUBGCP3, TUBGCP4, TUBGCP5 and TUBGCP6 and gamma-tubulin TUBG1 or TUBG2. TUBGCP2, TUBGCP3, TUBGCP4, TUBGCP5 and TUBGCP6 assemble in a 5:5:2:1:1 stoichiometry; each is associated with a gamma-tubulin, thereby arranging 14 gamma-tubulins in a helical manner. Gamma-tubulin at the first position is blocked by TUBGCP3 at the last position, allowing 13 protafilaments to grow into a microtubule. The gTuRC (via TUBGCP3 and TUBGCP6) interacts with ACTB and MZT1; the interactions form a luminal bridge that stabilizes the initial structure during complex assembly. The gTuRC (via TUBGCP2) interacts with MZT2A/MZT2B and CDK5RAP2 (via CM1 motif); the interactions play a role in gTuRC activation. Interacts with ATF5; the ATF5:PCNT:polyglutamylated tubulin (PGT) tripartite unites the mother centriole and the pericentriolar material (PCM) in the centrosome. In terms of tissue distribution, ubiquitously expressed.

The protein resides in the cytoplasm. It is found in the cytoskeleton. Its subcellular location is the microtubule organizing center. The protein localises to the centrosome. Component of the gamma-tubulin ring complex (gTuRC) which mediates microtubule nucleation. The gTuRC regulates the minus-end nucleation of alpha-beta tubulin heterodimers that grow into microtubule protafilaments, a critical step in centrosome duplication and spindle formation. Plays a role in neuronal migration. The protein is Gamma-tubulin complex component 2 (TUBGCP2) of Homo sapiens (Human).